The chain runs to 91 residues: Probable Fe(2+)-trafficking protein (91 aa).

It belongs to the Fe(2+)-trafficking protein family.

Could be a mediator in iron transactions between iron acquisition and iron-requiring processes, such as synthesis and/or repair of Fe-S clusters in biosynthetic enzymes. The chain is Probable Fe(2+)-trafficking protein from Burkholderia ambifaria (strain MC40-6).